A 375-amino-acid polypeptide reads, in one-letter code: Probable G-protein coupled receptor 27 (375 aa).

Residues 1–23 (MANASEPGGSGGGEAAALGLKLA) lie on the Extracellular side of the membrane. Asn-3 carries an N-linked (GlcNAc...) asparagine glycan. Residues 24–44 (TLSLLLCVSLAGNVLFALLIV) form a helical membrane-spanning segment. Topologically, residues 45-55 (RERSLHRAPYY) are cytoplasmic. A helical transmembrane segment spans residues 56–76 (LLLDLCLADGLRALACLPAVM). At 77 to 97 (LAARRAAAAAGAPPGALGCKL) the chain is on the extracellular side. Cys-95 and Cys-171 are joined by a disulfide. A helical transmembrane segment spans residues 98 to 118 (LAFLAALFCFHAAFLLLGVGV). Over 119–139 (TRYLAIAHHRFYAERLAGWPC) the chain is Cytoplasmic. Residues 140 to 160 (AAMLVCAAWALALAAAFPPVL) traverse the membrane as a helical segment. Residues 161–181 (DGGGDDEDAPCALEQRPDGAP) are Extracellular-facing. A helical transmembrane segment spans residues 182–202 (GALGFLLLLAVVVGATHLVYL). Topologically, residues 203-285 (RLLFFIHDRR…FKTEKRLCKM (83 aa)) are cytoplasmic. Residues 286 to 306 (FYAVTLLFLLLWGPYVVASYL) form a helical membrane-spanning segment. The Extracellular segment spans residues 307 to 320 (RVLVRPGAVPQAYL). Residues 321–341 (TASVWLTFAQAGINPVVCFLF) form a helical membrane-spanning segment. The Cytoplasmic portion of the chain corresponds to 342 to 375 (NRELRDCFRAQFPCCQSPRTTQATHPCDLKGIGL).

The protein belongs to the G-protein coupled receptor 1 family. As to expression, highly expressed as a 3.0 kb transcript in brain, ovary, testis, heart, prostate and peripheral Leukocytes. Lower levels in pancreas and small intestine. A 2.3 kb transcript was also found in peripheral Leukocytes. In brain regions, detected as a 3.0 kb transcript in all regions tested. Highest levels in the caudate nucleus, putamen, hippocampus and subthalamic nucleus. Lowest level in the cerebellum.

The protein localises to the cell membrane. Functionally, orphan receptor. Possible candidate for amine-like G-protein coupled receptor. In Homo sapiens (Human), this protein is Probable G-protein coupled receptor 27 (GPR27).